Consider the following 430-residue polypeptide: Histidine--tRNA ligase (430 aa).

The protein belongs to the class-II aminoacyl-tRNA synthetase family. As to quaternary structure, homodimer.

The protein localises to the cytoplasm. The enzyme catalyses tRNA(His) + L-histidine + ATP = L-histidyl-tRNA(His) + AMP + diphosphate + H(+). In Lactococcus lactis subsp. cremoris (strain MG1363), this protein is Histidine--tRNA ligase.